Consider the following 334-residue polypeptide: Tryptophan--tRNA ligase (334 aa).

ATP-binding positions include 11 to 13 (QPS) and 19 to 20 (GN). Residues 12-20 (PSGELTIGN) carry the 'HIGH' region motif. Asp-135 contributes to the L-tryptophan binding site. Residues 147 to 149 (GED), Val-186, and 195 to 199 (KMSKS) contribute to the ATP site. The 'KMSKS' region signature appears at 195 to 199 (KMSKS).

This sequence belongs to the class-I aminoacyl-tRNA synthetase family. In terms of assembly, homodimer.

It localises to the cytoplasm. The catalysed reaction is tRNA(Trp) + L-tryptophan + ATP = L-tryptophyl-tRNA(Trp) + AMP + diphosphate + H(+). In terms of biological role, catalyzes the attachment of tryptophan to tRNA(Trp). In Klebsiella aerogenes (Enterobacter aerogenes), this protein is Tryptophan--tRNA ligase.